The sequence spans 454 residues: MWGGRFSGSLAEHMRLFNDSFPIDRRLWAEDIRGSIAWANGLERAGILQAAECQELIAGLRQVYQEFEEGLFLPLTSDEDIHTAVERRLGDFIGALAGKLHTGRSRNDQVATDTRLWTLGALKLADDLIRDVQAALLEQAKAVGEAMLPGYTHLQRAQPVLLSHALLAHFWRLDRDRQRLHDATKRVSVLPLGSGALAGTAFAVDRAALAAELGFTSISQNSLDATSDRDYIVEILAAIALLGVHISQLAEDWIIWSSSEWGFVALDDAYSTGSSLMPQKKNPDSLELARGKSGRLIGNLITVLTLLKGLPSAYDKDLQEDKAPLFDAIDTLSLTLPVVAGAIRTARFNTERMESALDDAMLATDVADELVRRGVPFREAHHIAGRLVREAEQRGVGMRQLPAESFVAAHPSLTDVAGLFDFARSVAMRDVPGGTAPNAVRDQLIAAQHVLAEG.

Belongs to the lyase 1 family. Argininosuccinate lyase subfamily.

Its subcellular location is the cytoplasm. The enzyme catalyses 2-(N(omega)-L-arginino)succinate = fumarate + L-arginine. It participates in amino-acid biosynthesis; L-arginine biosynthesis; L-arginine from L-ornithine and carbamoyl phosphate: step 3/3. The chain is Argininosuccinate lyase from Herpetosiphon aurantiacus (strain ATCC 23779 / DSM 785 / 114-95).